The sequence spans 122 residues: Large ribosomal subunit protein uL14 (122 aa).

This sequence belongs to the universal ribosomal protein uL14 family. As to quaternary structure, part of the 50S ribosomal subunit. Forms a cluster with proteins L3 and L19. In the 70S ribosome, L14 and L19 interact and together make contacts with the 16S rRNA in bridges B5 and B8.

Binds to 23S rRNA. Forms part of two intersubunit bridges in the 70S ribosome. The protein is Large ribosomal subunit protein uL14 of Oenococcus oeni (strain ATCC BAA-331 / PSU-1).